We begin with the raw amino-acid sequence, 26 residues long: GTP-binding protein Rheb (26 aa).

Positions 1, 2, 13, 16, and 19 each coordinate GTP. Serine 1 is a binding site for Mg(2+). Positions 16–24 (YDPTIENTF) match the Effector region motif. Threonine 19 serves as a coordination point for Mg(2+).

Belongs to the small GTPase superfamily. Rheb family.

It catalyses the reaction GTP + H2O = GDP + phosphate + H(+). Its function is as follows. Binds GTP and exhibits intrinsic GTPase activity. The sequence is that of GTP-binding protein Rheb from Crocodylus siamensis (Siamese crocodile).